Consider the following 811-residue polypeptide: G-type lectin S-receptor-like serine/threonine-protein kinase LECRK2 (811 aa).

The first 23 residues, 1–23, serve as a signal peptide directing secretion; the sequence is MAPLLFLPILQLLLLYCTKSAQA. A Bulb-type lectin domain is found at 24–153; it reads QLNISIGSSL…DGATKWESFG (130 aa). Over 24 to 464 the chain is Extracellular; that stretch reads QLNISIGSSL…DKKYWILGSS (441 aa). Asn26, Asn39, Asn59, Asn219, Asn226, Asn237, and Asn242 each carry an N-linked (GlcNAc...) asparagine glycan. One can recognise an EGF-like; atypical domain in the interval 292–344; that stretch reads PENICQTIQTKVGSGACGFNSYCTFDGTKNTTNCLCPQRYKFFDNERTYKGCR. 5 disulfides stabilise this stretch: Cys296/Cys314, Cys308/Cys325, Cys327/Cys343, Cys389/Cys411, and Cys393/Cys399. Residue Asn321 is glycosylated (N-linked (GlcNAc...) asparagine). The region spanning 352-436 is the PAN domain; that stretch reads CDLDETAAMV…LQATVLLKVP (85 aa). A helical membrane pass occupies residues 465 to 485; it reads LFFGSSVLVNFLLIFVLLFGT. Topologically, residues 486–811 are cytoplasmic; it reads YCSITSRKKT…DPSSYISSLA (326 aa). The Protein kinase domain maps to 521-795; it reads GGFHEVLGTG…KVMQMLDGAV (275 aa). Residues 527–535 and Lys551 contribute to the ATP site; that span reads LGTGASGIV. Asp645 functions as the Proton acceptor in the catalytic mechanism.

It belongs to the protein kinase superfamily. Ser/Thr protein kinase family.

It is found in the membrane. The catalysed reaction is L-seryl-[protein] + ATP = O-phospho-L-seryl-[protein] + ADP + H(+). It catalyses the reaction L-threonyl-[protein] + ATP = O-phospho-L-threonyl-[protein] + ADP + H(+). Its function is as follows. Involved in resistance against the herbivorous insect brown planthopper (N.lugens, BPH). Member of the BPH3 (BPH resistance locus 3) cluster which contains LECRK1, LECRK2 and LECRK3. In Oryza sativa subsp. japonica (Rice), this protein is G-type lectin S-receptor-like serine/threonine-protein kinase LECRK2.